A 111-amino-acid polypeptide reads, in one-letter code: Protein EARLY FLOWERING 4 (111 aa).

The disordered stretch occupies residues 1-26; the sequence is MKRNGETKRRRNVAEEAEQGEDPAMW. Serine 45 is subject to Phosphoserine. Positions 90–111 are disordered; the sequence is FSSGFHGGKNGHDGGGAAGTRA. The segment covering 94-111 has biased composition (gly residues); the sequence is FHGGKNGHDGGGAAGTRA.

The protein belongs to the EARLY FLOWERING 4 family. Homodimer. Interacts with ELF3.

It localises to the nucleus. In terms of biological role, component of the central CCA1/LHY-TOC1 feedback loop in the circadian clock that promotes clock accuracy and is required for sustained rhythms in the absence of daily light/dark cycles. Part of a corepressor complex consisting of ELF4, ELF3, and LUX involved in the transcriptional regulation of APRR9. Increases ELF3 nuclear distribution and localization in nuclear bodies. Required for responsiveness to continuous red, by regulating phytochrome B (phyB) signaling (including during seedling de-etiolation) and gene expression. Mediates both entrainment to an environmental cycle and circadian rhythm sustainability under constant conditions. Controls flowering time. Necessary for light-induced expression of both CCA1 and LHY. The protein is Protein EARLY FLOWERING 4 (ELF4) of Arabidopsis thaliana (Mouse-ear cress).